The following is a 299-amino-acid chain: Proline iminopeptidase (299 aa).

Positions 26-272 (VLLLAGGPGF…QFLYCANGSH (247 aa)) constitute an AB hydrolase-1 domain. The active-site Nucleophile is Ser-103. Asp-245 is a catalytic residue. His-272 functions as the Proton donor in the catalytic mechanism.

It belongs to the peptidase S33 family. As to quaternary structure, monomer.

It carries out the reaction Release of N-terminal proline from a peptide.. In terms of biological role, releases the N-terminal proline from various substrates. The chain is Proline iminopeptidase from Chitinophaga pinensis (strain ATCC 43595 / DSM 2588 / LMG 13176 / NBRC 15968 / NCIMB 11800 / UQM 2034).